The following is a 107-amino-acid chain: U1-lycotoxin-Ls1f (107 aa).

The N-terminal stretch at 1–20 is a signal peptide; that stretch reads MMKVLVVVALLVTLISYSSS. A propeptide spanning residues 21 to 41 is cleaved from the precursor; the sequence is EGIDDLEADELLSLMANEQTR. 4 cysteine pairs are disulfide-bonded: C44-C59, C51-C68, C58-C86, and C70-C84.

Belongs to the neurotoxin 19 (CSTX) family. 04 (U1-Lctx) subfamily. In terms of tissue distribution, expressed by the venom gland.

The protein resides in the secreted. The sequence is that of U1-lycotoxin-Ls1f from Lycosa singoriensis (Wolf spider).